The sequence spans 61 residues: Small venom protein 1 (61 aa).

The signal sequence occupies residues 1-20 (MRCVAIFLVVICAFVLQALA).

Expressed by the venom gland.

The protein localises to the secreted. In Pimpla hypochondriaca (Parasitoid wasp), this protein is Small venom protein 1.